The following is a 785-amino-acid chain: Peptide transporter family 2 (785 aa).

Transmembrane regions (helical) follow at residues 46–66 (FSFYGMRAVLTLYFFNILNFS), 72–92 (VLFHAFTVICYSSPLLGSILA), 99–119 (FWTIFFISIFYACGQILLAFS), 134–154 (LLGLLIVGLGTGGIKPCVSAF), 167–187 (ISLFFSMFYFSINAGSLISMW), 208–228 (FGIPAILMIVATLVFMAGSFW), 303–323 (VIVMMIPVPMFWALYDQQGST), 345–365 (MGVLNAFLILFFIPIFQSIVY), and 382–402 (AGGGILTAVSFFVCGIVQLFV). Asn-467 is a glycosylation site (N-linked (GlcNAc...) asparagine). Helical transmembrane passes span 670-690 (ILWQIPQYVILTAGEVLFSIT), 711-731 (WLFTTAIGDLIVVVIFMLNIF), and 738-758 (MFVFGGIMLFVIFVFILLAVF).

It belongs to the major facilitator superfamily. Proton-dependent oligopeptide transporter (POT/PTR) (TC 2.A.17) family. In terms of tissue distribution, expressed in vulval, pharyngeal and anal muscles.

It localises to the membrane. Proton-dependent uptake of di- or tripeptides, and to a minor extent tetrapeptides. Transport is independent of sodium and chloride ions. Protein shows high affinity to peptide substrates. This Caenorhabditis elegans protein is Peptide transporter family 2 (pept-2).